Consider the following 176-residue polypeptide: Small ribosomal subunit protein uS5 (176 aa).

In terms of domain architecture, S5 DRBM spans 11–74; that stretch reads LSEVLVDVNR…QAAKKRMMKV (64 aa).

The protein belongs to the universal ribosomal protein uS5 family. Part of the 30S ribosomal subunit. Contacts proteins S4 and S8.

In terms of biological role, with S4 and S12 plays an important role in translational accuracy. Functionally, located at the back of the 30S subunit body where it stabilizes the conformation of the head with respect to the body. The sequence is that of Small ribosomal subunit protein uS5 from Rickettsia rickettsii (strain Iowa).